The following is a 183-amino-acid chain: Abscisic acid receptor PYL10 (183 aa).

The START-like stretch occupies residues 20 to 172 (HELVESQCSS…NLNSLADVTE (153 aa)). Cys-27 and Cys-153 are joined by a disulfide. Abscisate contacts are provided by residues Lys-56, 85-90 (ATKSTE), 112-118 (RLKNYSS), and Glu-137. Residues 81-85 (SGLPA) carry the Gate loop motif. The Latch loop motif lies at 111 to 113 (HRL).

The protein belongs to the PYR/PYL/RCAR abscisic acid intracellular receptor family. In terms of assembly, monomer. Forms heterodimer with PYL13, thus antagonizing PP2Cs-binding and ABA-independent inhibition of PP2Cs. Homodimer. Binds ABA on one subunit only. Binds to CARs protein in an ABA-independent manner, both at the plasma membrane and in the nucleus. Interacts with ABI1 and HAB1, and possibly with other PP2Cs, in an ABA-independent manner.

The protein localises to the cytoplasm. It localises to the nucleus. The protein resides in the cell membrane. Receptor for abscisic acid (ABA) required for ABA-mediated responses such as stomatal closure and germination inhibition. Inhibits the activity of group-A protein phosphatases type 2C (PP2Cs) in an ABA-independent manner but more efficiently when activated by ABA. Can be activated by both (-)-ABA and (+)-ABA. This is Abscisic acid receptor PYL10 (PYL10) from Arabidopsis thaliana (Mouse-ear cress).